The sequence spans 200 residues: Adenylate kinase (200 aa).

10–15 (GAGKGT) contributes to the ATP binding site. The segment at 30 to 59 (STGDMLRAAVAAETPVGLEAKAIMESGGLV) is NMP. AMP-binding positions include Thr31, Arg36, 57–59 (GLV), 85–88 (GFPR), and Gln92. The segment at 126–142 (KRAEETAARGQPVRKDD) is LID. Arg127 is an ATP binding site. 2 residues coordinate AMP: Arg139 and Arg150. Residue Lys178 coordinates ATP.

Belongs to the adenylate kinase family. Monomer.

Its subcellular location is the cytoplasm. The catalysed reaction is AMP + ATP = 2 ADP. Its pathway is purine metabolism; AMP biosynthesis via salvage pathway; AMP from ADP: step 1/1. Catalyzes the reversible transfer of the terminal phosphate group between ATP and AMP. Plays an important role in cellular energy homeostasis and in adenine nucleotide metabolism. This chain is Adenylate kinase, found in Methylorubrum extorquens (strain CM4 / NCIMB 13688) (Methylobacterium extorquens).